The sequence spans 438 residues: Glucose-6-phosphate isomerase (438 aa).

E289 acts as the Proton donor in catalysis. Active-site residues include H310 and K424.

The protein belongs to the GPI family.

It is found in the cytoplasm. The enzyme catalyses alpha-D-glucose 6-phosphate = beta-D-fructose 6-phosphate. It participates in carbohydrate biosynthesis; gluconeogenesis. Its pathway is carbohydrate degradation; glycolysis; D-glyceraldehyde 3-phosphate and glycerone phosphate from D-glucose: step 2/4. Catalyzes the reversible isomerization of glucose-6-phosphate to fructose-6-phosphate. The chain is Glucose-6-phosphate isomerase from Oenococcus oeni (strain ATCC BAA-331 / PSU-1).